The chain runs to 213 residues: NADH dehydrogenase [ubiquinone] iron-sulfur protein 7, mitochondrial (213 aa).

The N-terminal 37 residues, methionine 1–aspartate 37, are a transit peptide targeting the mitochondrion. Residues valine 30–proline 44 show a composition bias toward polar residues. The segment at valine 30–alanine 53 is disordered. Positions 88 and 89 each coordinate [4Fe-4S] cluster. Arginine 111 is modified (hydroxyarginine). The [4Fe-4S] cluster site is built by cysteine 153 and cysteine 183.

This sequence belongs to the complex I 20 kDa subunit family. In terms of assembly, core subunit of respiratory chain NADH dehydrogenase (Complex I) which is composed of 45 different subunits. This is a component of the iron-sulfur (IP) fragment of the enzyme. Requires [4Fe-4S] cluster as cofactor. Hydroxylated ar Arg-111 by NDUFAF5 early in the pathway of assembly of complex I, before the formation of the juncture between peripheral and membrane arms.

It localises to the mitochondrion inner membrane. The enzyme catalyses a ubiquinone + NADH + 5 H(+)(in) = a ubiquinol + NAD(+) + 4 H(+)(out). Its function is as follows. Core subunit of the mitochondrial membrane respiratory chain NADH dehydrogenase (Complex I) which catalyzes electron transfer from NADH through the respiratory chain, using ubiquinone as an electron acceptor. Essential for the catalytic activity of complex I. In Pan troglodytes (Chimpanzee), this protein is NADH dehydrogenase [ubiquinone] iron-sulfur protein 7, mitochondrial (NDUFS7).